Here is a 194-residue protein sequence, read N- to C-terminus: 13S globulin basic chain (194 aa).

One can recognise a Cupin type-1 domain in the interval 13–162; sequence ENIKSPQEAD…SFQISSEEAE (150 aa).

This sequence belongs to the 11S seed storage protein (globulins) family. As to quaternary structure, hexamer; each subunit is composed of an acidic and a basic chain derived from a single precursor and linked by a disulfide bond. Cotyledons and endosperm protein bodies.

In terms of biological role, seed storage protein with a relatively high level of Lys and Met. This Fagopyrum esculentum (Common buckwheat) protein is 13S globulin basic chain.